The primary structure comprises 385 residues: Cotranscriptional regulator ARB2A homolog (385 aa).

Disordered regions lie at residues 1–65 (MSDI…NGEE) and 220–239 (EEQKEKAKEEEEKKDDNGKL). A compositionally biased stretch (low complexity) spans 52 to 62 (NNNNNNSNNSN). Over residues 220-238 (EEQKEKAKEEEEKKDDNGK) the composition is skewed to basic and acidic residues.

It belongs to the ARB2A family.

In Dictyostelium discoideum (Social amoeba), this protein is Cotranscriptional regulator ARB2A homolog.